The following is a 162-amino-acid chain: Ribosome maturation factor RimP (162 aa).

This sequence belongs to the RimP family.

The protein resides in the cytoplasm. Its function is as follows. Required for maturation of 30S ribosomal subunits. In Streptococcus gordonii (strain Challis / ATCC 35105 / BCRC 15272 / CH1 / DL1 / V288), this protein is Ribosome maturation factor RimP.